We begin with the raw amino-acid sequence, 213 residues long: Protein FAM177A1 (213 aa).

An N-acetylmethionine modification is found at methionine 1. Serine 70 is modified (phosphoserine). Threonine 71 is modified (phosphothreonine). Positions 136 to 173 (IDEYYRMKKEEEEEEEENRMSEEAEKQYQQNKLQTDSI) form a coiled coil. Positions 147–175 (EEEEEENRMSEEAEKQYQQNKLQTDSIVQ) are disordered. A compositionally biased stretch (polar residues) spans 162–175 (QYQQNKLQTDSIVQ).

It belongs to the FAM177 family.

This chain is Protein FAM177A1 (FAM177A1), found in Homo sapiens (Human).